A 219-amino-acid chain; its full sequence is Ribose-5-phosphate isomerase A (219 aa).

Residues 28–31, 81–84, and 94–97 contribute to the substrate site; these read TGST, DGAD, and KGGG. Catalysis depends on glutamate 103, which acts as the Proton acceptor. Position 121 (lysine 121) interacts with substrate.

The protein belongs to the ribose 5-phosphate isomerase family. Homodimer.

It catalyses the reaction aldehydo-D-ribose 5-phosphate = D-ribulose 5-phosphate. The protein operates within carbohydrate degradation; pentose phosphate pathway; D-ribose 5-phosphate from D-ribulose 5-phosphate (non-oxidative stage): step 1/1. In terms of biological role, catalyzes the reversible conversion of ribose-5-phosphate to ribulose 5-phosphate. The protein is Ribose-5-phosphate isomerase A of Pectobacterium atrosepticum (strain SCRI 1043 / ATCC BAA-672) (Erwinia carotovora subsp. atroseptica).